We begin with the raw amino-acid sequence, 937 residues long: Isoleucine--tRNA ligase (937 aa).

The 'HIGH' region motif lies at 58-68 (PYANGSIHIGH). Residue Glu561 coordinates L-isoleucyl-5'-AMP. A 'KMSKS' region motif is present at residues 602–606 (KMSKS). Lys605 provides a ligand contact to ATP. Positions 900, 903, 920, and 923 each coordinate Zn(2+).

The protein belongs to the class-I aminoacyl-tRNA synthetase family. IleS type 1 subfamily. As to quaternary structure, monomer. Requires Zn(2+) as cofactor.

It localises to the cytoplasm. The enzyme catalyses tRNA(Ile) + L-isoleucine + ATP = L-isoleucyl-tRNA(Ile) + AMP + diphosphate. Catalyzes the attachment of isoleucine to tRNA(Ile). As IleRS can inadvertently accommodate and process structurally similar amino acids such as valine, to avoid such errors it has two additional distinct tRNA(Ile)-dependent editing activities. One activity is designated as 'pretransfer' editing and involves the hydrolysis of activated Val-AMP. The other activity is designated 'posttransfer' editing and involves deacylation of mischarged Val-tRNA(Ile). The sequence is that of Isoleucine--tRNA ligase from Pectobacterium carotovorum subsp. carotovorum (strain PC1).